The following is a 234-amino-acid chain: Elongation factor Tu (234 aa).

Residues 1-125 (KNMITGAAQM…EVDAFIPTPE (125 aa)) form the tr-type G domain. 47–50 (NKQD) serves as a coordination point for GTP.

It belongs to the TRAFAC class translation factor GTPase superfamily. Classic translation factor GTPase family. EF-Tu/EF-1A subfamily. As to quaternary structure, monomer.

It localises to the cytoplasm. It catalyses the reaction GTP + H2O = GDP + phosphate + H(+). Functionally, GTP hydrolase that promotes the GTP-dependent binding of aminoacyl-tRNA to the A-site of ribosomes during protein biosynthesis. This is Elongation factor Tu (tufA) from Prochlorothrix hollandica.